A 214-amino-acid chain; its full sequence is uncharacterized protein (214 aa).

The tract at residues 131 to 214 is disordered; it reads TEDILSPPSP…SSSSDSLDAY (84 aa). The span at 174–189 shows a compositional bias: basic residues; sequence HRRRRTRRQLRYRQRV. A compositionally biased stretch (low complexity) spans 197 to 214; it reads DLGEPLESSSSSDSLDAY.

This is an uncharacterized protein from Tupaia.